The following is a 561-amino-acid chain: uncharacterized protein (561 aa).

A run of 6 helical transmembrane segments spans residues 27-49 (ILEFLAAQPLLTLALILAVGLLI), 54-71 (FFGISLGAAAVLFVALAL), 83-105 (LVYQLGLAMFVYAIGLSAGSEFF), 115-137 (LTLFMIGLLMLMMAVAYGIIKLF), 142-162 (IIGAGMFAGALSSTPGMAAMV), and 177-199 (VVGYSLAYPGAVIGSILVAAIGA). The 82-residue stretch at 292–373 (QQDVPIEDTD…MSEVRRFLGD (82 aa)) folds into the RCK C-terminal domain. The next 4 helical transmembrane spans lie at 383-405 (LMPFAFGLVIGLAIGVIPIPLPG), 409-428 (LSLGFGGGPIVAGLILGALN), 441-463 (ASRTISTFGLAIFLAGVGTSAGV), and 478-500 (IAGGFIVTISSALVCALVCMPLF).

The protein belongs to the AAE transporter (TC 2.A.81) family.

It localises to the cell membrane. This is an uncharacterized protein from Corynebacterium diphtheriae (strain ATCC 700971 / NCTC 13129 / Biotype gravis).